Reading from the N-terminus, the 116-residue chain is Cyclin-dependent protein kinase inhibitor SMR9 (116 aa).

A compositionally biased stretch (basic residues) spans 1–22; that stretch reads MASKGKKPLRRTTTRRRKRSHF. The interval 1 to 62 is disordered; the sequence is MASKGKKPLR…PVSAESGCCT (62 aa). Low complexity predominate over residues 35-56; sequence VTSTSSTSTSPTSTATPSPVSA.

Functionally, probable cyclin-dependent protein kinase (CDK) inhibitor that functions as a repressor of mitosis in the endoreduplication cell cycle. In Arabidopsis thaliana (Mouse-ear cress), this protein is Cyclin-dependent protein kinase inhibitor SMR9.